The sequence spans 156 residues: Small ribosomal subunit protein uS7 (156 aa).

This sequence belongs to the universal ribosomal protein uS7 family. In terms of assembly, part of the 30S ribosomal subunit. Contacts proteins S9 and S11.

Its function is as follows. One of the primary rRNA binding proteins, it binds directly to 16S rRNA where it nucleates assembly of the head domain of the 30S subunit. Is located at the subunit interface close to the decoding center, probably blocks exit of the E-site tRNA. The sequence is that of Small ribosomal subunit protein uS7 from Deinococcus geothermalis (strain DSM 11300 / CIP 105573 / AG-3a).